The sequence spans 445 residues: MTKVRFAPSPTGKLHVGNVRTAIFNYLFARKAGGTFVLRIDDTDVERSTKAYEDGIRADLTWLGISWDETFKQSDRFDRYEAAAETLKAKGLLYPCYETGEDLDRKRRLQMANGRPPVYDRAALDLTDAEKAGFEAEGRKPHWRFKLSGNPVQWDDMVRGHVSIETSSLSDPILIREDGSFLYTLPSVLDDIESEITHIIRGEDHTTNSGAQIEIFEALGGKAPIFGHQALLVGADGGKLSKRTGSLGIADLRDVDGLEPMAIMSLLARIGTSDPVEAFADVEGILEGFDLGKLSRSPARFDDEELKRVNAKLLHAMPYDVAQPKLAVLGADKGEAVWEAVRPNLETLADAKAWAVLIDGPVTPVIEEPDYAAAAAQHLPAGELDGDSWSVWTNALKEATGRKGKQLFMPLRLMLTGEARGPEMAVLLPLIGRDKVLKRLAGEAA.

The short motif at 8–18 (PSPTGKLHVGN) is the 'HIGH' region element. The 'KMSKS' region signature appears at 239–243 (KLSKR). Lys242 provides a ligand contact to ATP.

The protein belongs to the class-I aminoacyl-tRNA synthetase family. Glutamate--tRNA ligase type 1 subfamily. As to quaternary structure, monomer.

Its subcellular location is the cytoplasm. The catalysed reaction is tRNA(Glu) + L-glutamate + ATP = L-glutamyl-tRNA(Glu) + AMP + diphosphate. Catalyzes the attachment of glutamate to tRNA(Glu) in a two-step reaction: glutamate is first activated by ATP to form Glu-AMP and then transferred to the acceptor end of tRNA(Glu). The polypeptide is Glutamate--tRNA ligase 1 (Maricaulis maris (strain MCS10) (Caulobacter maris)).